The following is a 317-amino-acid chain: tRNA-cytidine(32) 2-sulfurtransferase (317 aa).

The PP-loop motif signature appears at 63 to 68; that stretch reads SGGKDS. The [4Fe-4S] cluster site is built by Cys-138, Cys-141, and Cys-229.

The protein belongs to the TtcA family. As to quaternary structure, homodimer. Mg(2+) serves as cofactor. Requires [4Fe-4S] cluster as cofactor.

It localises to the cytoplasm. It carries out the reaction cytidine(32) in tRNA + S-sulfanyl-L-cysteinyl-[cysteine desulfurase] + AH2 + ATP = 2-thiocytidine(32) in tRNA + L-cysteinyl-[cysteine desulfurase] + A + AMP + diphosphate + H(+). The protein operates within tRNA modification. Its function is as follows. Catalyzes the ATP-dependent 2-thiolation of cytidine in position 32 of tRNA, to form 2-thiocytidine (s(2)C32). The sulfur atoms are provided by the cysteine/cysteine desulfurase (IscS) system. The polypeptide is tRNA-cytidine(32) 2-sulfurtransferase (Janthinobacterium sp. (strain Marseille) (Minibacterium massiliensis)).